The primary structure comprises 151 residues: Lipoprotein signal peptidase (151 aa).

Transmembrane regions (helical) follow at residues 33–53 (VIPD…FGLL), 58–78 (WIFI…QFKI), and 87–107 (LTLG…LFIG). Residues D111 and D126 contribute to the active site. The helical transmembrane segment at 120 to 140 (FVFNFADSAIVVGVGLLMILM) threads the bilayer.

Belongs to the peptidase A8 family.

The protein localises to the cell membrane. It carries out the reaction Release of signal peptides from bacterial membrane prolipoproteins. Hydrolyzes -Xaa-Yaa-Zaa-|-(S,diacylglyceryl)Cys-, in which Xaa is hydrophobic (preferably Leu), and Yaa (Ala or Ser) and Zaa (Gly or Ala) have small, neutral side chains.. It participates in protein modification; lipoprotein biosynthesis (signal peptide cleavage). This protein specifically catalyzes the removal of signal peptides from prolipoproteins. The polypeptide is Lipoprotein signal peptidase (Desulfitobacterium hafniense (strain DSM 10664 / DCB-2)).